A 440-amino-acid chain; its full sequence is MSYFEHIPEIRYEGPQSDNPLAYRHYDKSKKVLGKTLEEHLRIAVCYWHTFVWPGVDIFGQGTFRRPWQQAGDAMERARQKADSAFEFFSKLGTPYYTFHDTDVSPEGSSLKEYSENFLRITDYLARKQEDTGIKLLWGTANLFSHPRYAAGAATSPDPEVFAFAATQVRHALDATQRLGGDNYVLWGGREGYDTLLNTDLMRERDQLARFLHMVVDHAHKIGFKGSLLIEPKPQEPTKHQYDYDVATVHGFLLQHGLEKEIRVNIEANHATLAGHSFHHEIATAYALGIFGSVDANRGDPQNGWDTDQFPNSVEELTLAFYEILKHGGFTTGGMNFDSKVRRQSVDPEDLFYGHIGAIDNLALAVERAAVLIENDRLDQFKRQRYAGWDADFGRKILSGDYSLSTLATDALARGLNPQHASGHQELMENIVNQAIYSGR.

Active-site residues include His100 and Asp103. Glu231, Glu267, His270, Asp295, Asp306, Asp308, and Asp338 together coordinate Mg(2+).

Belongs to the xylose isomerase family. In terms of assembly, homotetramer. Requires Mg(2+) as cofactor.

The protein localises to the cytoplasm. The enzyme catalyses alpha-D-xylose = alpha-D-xylulofuranose. The polypeptide is Xylose isomerase (Paraburkholderia xenovorans (strain LB400)).